A 468-amino-acid polypeptide reads, in one-letter code: Peroxisome proliferator-activated receptor alpha (468 aa).

A DNA-binding region (nuclear receptor) is located at residues 99 to 173 (NIECRICGDK…VGMSHNAIRF (75 aa)). NR C4-type zinc fingers lie at residues 102–122 (CRIC…CEGC) and 139–161 (CDRS…FHKC). The 228-residue stretch at 239–466 (FVIHDMETLC…HPLLQEIYRD (228 aa)) folds into the NR LBD domain. The interval 304–433 (DQVTLLKYGV…PKLLQKMVDL (130 aa)) is required for heterodimerization with RXRA.

The protein belongs to the nuclear hormone receptor family. NR1 subfamily. Heterodimer; with RXRA. This heterodimerization is required for DNA binding and transactivation activity. Interacts with NCOA3 coactivator. Interacts with CITED2; the interaction stimulates its transcriptional activity. Also interacts with PPARBP in vitro. Interacts with AKAP13, LPIN1, PRDM16 and coactivator NCOA6. Interacts with ASXL1 and ASXL2. Interacts with PER2. Interacts with SIRT1; the interaction seems to be modulated by NAD(+) levels. Interacts with CRY1 and CRY2. In hepatocytes, interacts with PAQR3 and HUWE1; the interactions promote PPARA poylubiquitination and HUWE1-mediated degradation. In terms of processing, phosphorylated. Post-translationally, ubiquitinated by E3 ubiquitin-protein ligase HUWE1; leading to proteasomal degradation. In terms of tissue distribution, expressed predominantly in liver and kidney.

The protein localises to the nucleus. Its function is as follows. Ligand-activated transcription factor. Key regulator of lipid metabolism. Activated by the endogenous ligand 1-palmitoyl-2-oleoyl-sn-glycerol-3-phosphocholine (16:0/18:1-GPC). Activated by oleylethanolamide, a naturally occurring lipid that regulates satiety. Receptor for peroxisome proliferators such as hypolipidemic drugs and fatty acids. Regulates the peroxisomal beta-oxidation pathway of fatty acids. Functions as a transcription activator for the ACOX1 and P450 genes. Transactivation activity requires heterodimerization with RXRA and is antagonized by NR2C2. May be required for the propagation of clock information to metabolic pathways regulated by PER2. The protein is Peroxisome proliferator-activated receptor alpha (Ppara) of Rattus norvegicus (Rat).